A 334-amino-acid chain; its full sequence is Heat-inducible transcription repressor HrcA (334 aa).

The protein belongs to the HrcA family.

Functionally, negative regulator of class I heat shock genes (grpE-dnaK-dnaJ and groELS operons). Prevents heat-shock induction of these operons. The polypeptide is Heat-inducible transcription repressor HrcA (Bordetella bronchiseptica (strain ATCC BAA-588 / NCTC 13252 / RB50) (Alcaligenes bronchisepticus)).